The following is a 332-amino-acid chain: Glycerol-3-phosphate dehydrogenase [NAD(P)+] (332 aa).

Positions 11, 30, and 108 each coordinate NADPH. Residues K108, G137, and S139 each contribute to the sn-glycerol 3-phosphate site. A141 contributes to the NADPH binding site. Residues K192, D245, S255, R256, and N257 each contribute to the sn-glycerol 3-phosphate site. K192 functions as the Proton acceptor in the catalytic mechanism. R256 lines the NADPH pocket. Residues V280 and E282 each coordinate NADPH.

It belongs to the NAD-dependent glycerol-3-phosphate dehydrogenase family.

It localises to the cytoplasm. It carries out the reaction sn-glycerol 3-phosphate + NAD(+) = dihydroxyacetone phosphate + NADH + H(+). The enzyme catalyses sn-glycerol 3-phosphate + NADP(+) = dihydroxyacetone phosphate + NADPH + H(+). It participates in membrane lipid metabolism; glycerophospholipid metabolism. Its function is as follows. Catalyzes the reduction of the glycolytic intermediate dihydroxyacetone phosphate (DHAP) to sn-glycerol 3-phosphate (G3P), the key precursor for phospholipid synthesis. The polypeptide is Glycerol-3-phosphate dehydrogenase [NAD(P)+] (Burkholderia thailandensis (strain ATCC 700388 / DSM 13276 / CCUG 48851 / CIP 106301 / E264)).